The sequence spans 407 residues: 4-hydroxy-3-methylbut-2-en-1-yl diphosphate synthase (ferredoxin) (407 aa).

4 residues coordinate [4Fe-4S] cluster: Cys316, Cys319, Cys350, and Glu357.

This sequence belongs to the IspG family. The cofactor is [4Fe-4S] cluster.

The enzyme catalyses (2E)-4-hydroxy-3-methylbut-2-enyl diphosphate + 2 oxidized [2Fe-2S]-[ferredoxin] + H2O = 2-C-methyl-D-erythritol 2,4-cyclic diphosphate + 2 reduced [2Fe-2S]-[ferredoxin] + H(+). The protein operates within isoprenoid biosynthesis; isopentenyl diphosphate biosynthesis via DXP pathway; isopentenyl diphosphate from 1-deoxy-D-xylulose 5-phosphate: step 5/6. In terms of biological role, converts 2C-methyl-D-erythritol 2,4-cyclodiphosphate (ME-2,4cPP) into 1-hydroxy-2-methyl-2-(E)-butenyl 4-diphosphate. This is 4-hydroxy-3-methylbut-2-en-1-yl diphosphate synthase (ferredoxin) from Cyanothece sp. (strain PCC 7425 / ATCC 29141).